The primary structure comprises 339 residues: tRNA N6-adenosine threonylcarbamoyltransferase (339 aa).

Fe cation contacts are provided by histidine 114 and histidine 118. Substrate contacts are provided by residues 137 to 141, aspartate 170, glycine 183, aspartate 187, and asparagine 277; that span reads VVSGG. Aspartate 305 is a binding site for Fe cation.

It belongs to the KAE1 / TsaD family. Requires Fe(2+) as cofactor.

Its subcellular location is the cytoplasm. The catalysed reaction is L-threonylcarbamoyladenylate + adenosine(37) in tRNA = N(6)-L-threonylcarbamoyladenosine(37) in tRNA + AMP + H(+). Required for the formation of a threonylcarbamoyl group on adenosine at position 37 (t(6)A37) in tRNAs that read codons beginning with adenine. Is involved in the transfer of the threonylcarbamoyl moiety of threonylcarbamoyl-AMP (TC-AMP) to the N6 group of A37, together with TsaE and TsaB. TsaD likely plays a direct catalytic role in this reaction. The polypeptide is tRNA N6-adenosine threonylcarbamoyltransferase (Clostridium perfringens (strain SM101 / Type A)).